Consider the following 418-residue polypeptide: Tyrosine--tRNA ligase (418 aa).

Tyr34 contributes to the L-tyrosine binding site. A 'HIGH' region motif is present at residues 39–48 (PTADSLHLGH). L-tyrosine contacts are provided by Tyr169 and Gln173. Residues 229-233 (KFGKS) carry the 'KMSKS' region motif. Lys232 contacts ATP. The 67-residue stretch at 352–418 (HNIVEILVAA…GKKKYAVLTY (67 aa)) folds into the S4 RNA-binding domain.

Belongs to the class-I aminoacyl-tRNA synthetase family. TyrS type 1 subfamily. Homodimer.

Its subcellular location is the cytoplasm. The enzyme catalyses tRNA(Tyr) + L-tyrosine + ATP = L-tyrosyl-tRNA(Tyr) + AMP + diphosphate + H(+). Functionally, catalyzes the attachment of tyrosine to tRNA(Tyr) in a two-step reaction: tyrosine is first activated by ATP to form Tyr-AMP and then transferred to the acceptor end of tRNA(Tyr). The polypeptide is Tyrosine--tRNA ligase (Streptococcus pyogenes serotype M49 (strain NZ131)).